Consider the following 449-residue polypeptide: tRNA-2-methylthio-N(6)-dimethylallyladenosine synthase (449 aa).

One can recognise an MTTase N-terminal domain in the interval 3–124; the sequence is KMLYIKTYGC…LPTMLEKLDS (122 aa). [4Fe-4S] cluster-binding residues include Cys12, Cys48, Cys87, Cys163, Cys167, and Cys170. The 232-residue stretch at 149-380 folds into the Radical SAM core domain; that stretch reads KSPTVSGLVS…QAQLMLQQLE (232 aa). Residues 383–447 enclose the TRAM domain; the sequence is QKLIGKVVPV…ASSLFGEVCP (65 aa).

It belongs to the methylthiotransferase family. MiaB subfamily. Monomer. It depends on [4Fe-4S] cluster as a cofactor.

Its subcellular location is the cytoplasm. The enzyme catalyses N(6)-dimethylallyladenosine(37) in tRNA + (sulfur carrier)-SH + AH2 + 2 S-adenosyl-L-methionine = 2-methylsulfanyl-N(6)-dimethylallyladenosine(37) in tRNA + (sulfur carrier)-H + 5'-deoxyadenosine + L-methionine + A + S-adenosyl-L-homocysteine + 2 H(+). Functionally, catalyzes the methylthiolation of N6-(dimethylallyl)adenosine (i(6)A), leading to the formation of 2-methylthio-N6-(dimethylallyl)adenosine (ms(2)i(6)A) at position 37 in tRNAs that read codons beginning with uridine. This is tRNA-2-methylthio-N(6)-dimethylallyladenosine synthase from Orientia tsutsugamushi (strain Boryong) (Rickettsia tsutsugamushi).